Here is a 376-residue protein sequence, read N- to C-terminus: Anhydro-N-acetylmuramic acid kinase (376 aa).

Residue Gly16–Asp23 coordinates ATP.

The protein belongs to the anhydro-N-acetylmuramic acid kinase family.

The enzyme catalyses 1,6-anhydro-N-acetyl-beta-muramate + ATP + H2O = N-acetyl-D-muramate 6-phosphate + ADP + H(+). It participates in amino-sugar metabolism; 1,6-anhydro-N-acetylmuramate degradation. It functions in the pathway cell wall biogenesis; peptidoglycan recycling. In terms of biological role, catalyzes the specific phosphorylation of 1,6-anhydro-N-acetylmuramic acid (anhMurNAc) with the simultaneous cleavage of the 1,6-anhydro ring, generating MurNAc-6-P. Is required for the utilization of anhMurNAc either imported from the medium or derived from its own cell wall murein, and thus plays a role in cell wall recycling. This chain is Anhydro-N-acetylmuramic acid kinase, found in Paraburkholderia xenovorans (strain LB400).